The sequence spans 259 residues: Protein FAM220A (259 aa).

The interval 29 to 66 is disordered; that stretch reads GLKRRSEKRNPSPSDVPSWTDQPVADTHGKSRAMAAAS. Positions 39–49 are enriched in polar residues; sequence PSPSDVPSWTD.

Interacts with transcriptional activator STAT3; the interaction occurs in both the nucleus and the cytoplasm, is enhanced by IL6 and promotes STAT3 dephosphorylation, leading to negative regulation of STAT3 transcriptional activator activity. Can interact with both unphosphorylated and phosphorylated STAT3 but interacts preferentially with phosphorylated STAT3 in the nucleus. Interacts with protein phosphatase PTPN2/TC45; this promotes interaction of PTPN2 with STAT3, leading to dephosphorylation of STAT3 by PTPN2.

It is found in the nucleus. The protein localises to the cytoplasm. It localises to the cytoplasmic vesicle. The protein resides in the secretory vesicle. Its subcellular location is the acrosome. Promotes dephosphorylation of transcriptional activator STAT3 by interacting with both STAT3 and protein phosphatase PTPN2. This promotes interaction of PTPN2 with STAT3 and mediates STAT3 dephosphorylation by PTPN2, leading to negative regulation of STAT3 transcriptional activator activity. May be required for spermiogenesis or sperm function. In Rattus norvegicus (Rat), this protein is Protein FAM220A (Fam220a).